A 316-amino-acid chain; its full sequence is Protoheme IX farnesyltransferase (316 aa).

9 helical membrane-spanning segments follow: residues 32–52 (VMSLVVFTAFAGLVLAPGHIN), 53–73 (PVLGLIAILCIAVGAGASGAL), 93–113 (IPAGRIAPSEALAFGLVLSGF), 116–136 (VILGLAVNWLSAAILAFTIFF), 152–172 (NIVIGGAAGAFPPMIGWACVT), 180–200 (TVLFLIIFLWTPAHFWALALF), 221–241 (VTKHQIVAYAVLTAICAVLPS), 252–271 (LVAAALGAIFVYCSIAVWRM), and 289–309 (IFYLFAVFSALMIDRLAAILV).

It belongs to the UbiA prenyltransferase family. Protoheme IX farnesyltransferase subfamily.

Its subcellular location is the cell inner membrane. The enzyme catalyses heme b + (2E,6E)-farnesyl diphosphate + H2O = Fe(II)-heme o + diphosphate. It functions in the pathway porphyrin-containing compound metabolism; heme O biosynthesis; heme O from protoheme: step 1/1. In terms of biological role, converts heme B (protoheme IX) to heme O by substitution of the vinyl group on carbon 2 of heme B porphyrin ring with a hydroxyethyl farnesyl side group. This chain is Protoheme IX farnesyltransferase, found in Rhizobium etli (strain ATCC 51251 / DSM 11541 / JCM 21823 / NBRC 15573 / CFN 42).